Consider the following 432-residue polypeptide: Homogentisate 1,2-dioxygenase (432 aa).

His287 functions as the Proton acceptor in the catalytic mechanism. 2 residues coordinate Fe cation: His330 and Glu336. Residues Tyr345 and His366 each coordinate homogentisate. His366 provides a ligand contact to Fe cation.

The protein belongs to the homogentisate dioxygenase family. Hexamer; dimer of trimers. Fe cation serves as cofactor.

It catalyses the reaction homogentisate + O2 = 4-maleylacetoacetate + H(+). It participates in amino-acid degradation; L-phenylalanine degradation; acetoacetate and fumarate from L-phenylalanine: step 4/6. Its function is as follows. Involved in the catabolism of homogentisate (2,5-dihydroxyphenylacetate or 2,5-OH-PhAc), a central intermediate in the degradation of phenylalanine and tyrosine. Catalyzes the oxidative ring cleavage of the aromatic ring of homogentisate to yield maleylacetoacetate. This Pseudomonas aeruginosa (strain ATCC 15692 / DSM 22644 / CIP 104116 / JCM 14847 / LMG 12228 / 1C / PRS 101 / PAO1) protein is Homogentisate 1,2-dioxygenase.